We begin with the raw amino-acid sequence, 600 residues long: Aspartate--tRNA(Asp/Asn) ligase (600 aa).

Residue glutamate 187 coordinates L-aspartate. The segment at glutamine 211–lysine 214 is aspartate. 2 residues coordinate L-aspartate: arginine 233 and histidine 463. Arginine 233–glutamate 235 is an ATP binding site. Glutamate 497 provides a ligand contact to ATP. Residue arginine 504 participates in L-aspartate binding. An ATP-binding site is contributed by glycine 549–arginine 552.

Belongs to the class-II aminoacyl-tRNA synthetase family. Type 1 subfamily. As to quaternary structure, homodimer.

It localises to the cytoplasm. It catalyses the reaction tRNA(Asx) + L-aspartate + ATP = L-aspartyl-tRNA(Asx) + AMP + diphosphate. In terms of biological role, aspartyl-tRNA synthetase with relaxed tRNA specificity since it is able to aspartylate not only its cognate tRNA(Asp) but also tRNA(Asn). Reaction proceeds in two steps: L-aspartate is first activated by ATP to form Asp-AMP and then transferred to the acceptor end of tRNA(Asp/Asn). This is Aspartate--tRNA(Asp/Asn) ligase from Wolbachia pipientis subsp. Culex pipiens (strain wPip).